The chain runs to 168 residues: PTS system glucose-specific EIIA component (168 aa).

The 105-residue stretch at 38-142 folds into the PTS EIIA type-1 domain; that stretch reads DEVFSNKIVG…STLTPVIISN (105 aa). Positions 75 and 90 each coordinate Zn(2+). Residue His-90 is the Tele-phosphohistidine intermediate; for EIIA activity of the active site. His-90 carries the phosphohistidine; by HPr modification.

Zn(2+) is required as a cofactor.

The protein resides in the cytoplasm. The phosphoenolpyruvate-dependent sugar phosphotransferase system (sugar PTS), a major carbohydrate active transport system, catalyzes the phosphorylation of incoming sugar substrates concomitantly with their translocation across the cell membrane. The enzyme II complex composed of PtsG and Crr is involved in glucose transport. The chain is PTS system glucose-specific EIIA component (crr) from Buchnera aphidicola subsp. Baizongia pistaciae (strain Bp).